The sequence spans 640 residues: Threonine--tRNA ligase (640 aa).

A TGS domain is found at 1 to 63; the sequence is MSSVTVTLPD…SEDCEIEIVT (63 aa). The interval 242–533 is catalytic; the sequence is DHRKLGREMD…LIEHYNGRFP (292 aa). Zn(2+) contacts are provided by Cys334, His385, and His510.

It belongs to the class-II aminoacyl-tRNA synthetase family. Homodimer. Zn(2+) is required as a cofactor.

The protein localises to the cytoplasm. The enzyme catalyses tRNA(Thr) + L-threonine + ATP = L-threonyl-tRNA(Thr) + AMP + diphosphate + H(+). Its function is as follows. Catalyzes the attachment of threonine to tRNA(Thr) in a two-step reaction: L-threonine is first activated by ATP to form Thr-AMP and then transferred to the acceptor end of tRNA(Thr). The protein is Threonine--tRNA ligase of Halobacterium salinarum (strain ATCC 29341 / DSM 671 / R1).